We begin with the raw amino-acid sequence, 208 residues long: Uracil phosphoribosyltransferase (208 aa).

5-phospho-alpha-D-ribose 1-diphosphate contacts are provided by residues Arg78, Arg103, and 130 to 138 (DPMLATGGS). Uracil-binding positions include Ile193 and 198-200 (GDA). Asp199 contributes to the 5-phospho-alpha-D-ribose 1-diphosphate binding site.

Belongs to the UPRTase family. Mg(2+) serves as cofactor.

The catalysed reaction is UMP + diphosphate = 5-phospho-alpha-D-ribose 1-diphosphate + uracil. It participates in pyrimidine metabolism; UMP biosynthesis via salvage pathway; UMP from uracil: step 1/1. With respect to regulation, allosterically activated by GTP. Catalyzes the conversion of uracil and 5-phospho-alpha-D-ribose 1-diphosphate (PRPP) to UMP and diphosphate. This is Uracil phosphoribosyltransferase from Pectobacterium atrosepticum (strain SCRI 1043 / ATCC BAA-672) (Erwinia carotovora subsp. atroseptica).